The following is a 465-amino-acid chain: Putative F-box protein At1g21990 (465 aa).

The F-box domain maps to 8–54 (RDLISGSPDEILGKILSFLPTHHAATTSVLSKRWRNLLPLVDKLELT).

The chain is Putative F-box protein At1g21990 from Arabidopsis thaliana (Mouse-ear cress).